The following is a 301-amino-acid chain: MDLSELERDNTGRCRLSSPVPAVCLKEPCVLGVDEAGRGPVLGPMVYAICYCPLSRLADLEALKVADSKTLTENERERLFAKMEEDGDFVGWALDVLSPNLISTSMLGRVKYNLNSLSHDTAAGLIQYALDQNVNVTQVFVDTVGMPETYQARLQQHFPGIEVTVKAKADSLFPVVSAASIFAKVARDKAVKNWQFVENLQDLDSDYGSGYPNDPKTKAWLRKHVDPVFGFPQFVRFSWSTAQAILEKEAEDVIWEDSEAEEDPERPGKITSYFSQGPQTCRPQAPHRYFQERGLEAASSL.

An N-acetylmethionine modification is found at M1. Positions 28-251 (PCVLGVDEAG…AQAILEKEAE (224 aa)) constitute an RNase H type-2 domain. A divalent metal cation-binding residues include D34, E35, and D142. T217 is subject to Phosphothreonine. A compositionally biased stretch (acidic residues) spans 255-264 (WEDSEAEEDP). Positions 255–284 (WEDSEAEEDPERPGKITSYFSQGPQTCRPQ) are disordered. The residue at position 258 (S258) is a Phosphoserine. Over residues 272 to 282 (SYFSQGPQTCR) the composition is skewed to polar residues.

The protein belongs to the RNase HII family. Eukaryotic subfamily. In terms of assembly, the RNase H2 complex is a heterotrimer composed of the catalytic subunit RNASEH2A and the non-catalytic subunits RNASEH2B and RNASEH2C. Mn(2+) is required as a cofactor. The cofactor is Mg(2+).

The protein localises to the nucleus. It carries out the reaction Endonucleolytic cleavage to 5'-phosphomonoester.. Catalytic subunit of RNase HII, an endonuclease that specifically degrades the RNA of RNA:DNA hybrids. Participates in DNA replication, possibly by mediating the removal of lagging-strand Okazaki fragment RNA primers during DNA replication. Mediates the excision of single ribonucleotides from DNA:RNA duplexes. This is Ribonuclease H2 subunit A (Rnaseh2a) from Mus musculus (Mouse).